A 147-amino-acid polypeptide reads, in one-letter code: Phosphoribosyl-AMP cyclohydrolase (147 aa).

Asp-97 serves as a coordination point for Mg(2+). Cys-98 lines the Zn(2+) pocket. Mg(2+) is bound by residues Asp-99 and Asp-101. The Zn(2+) site is built by Cys-114 and Cys-121.

It belongs to the PRA-CH family. Homodimer. Requires Mg(2+) as cofactor. The cofactor is Zn(2+).

The protein localises to the cytoplasm. The catalysed reaction is 1-(5-phospho-beta-D-ribosyl)-5'-AMP + H2O = 1-(5-phospho-beta-D-ribosyl)-5-[(5-phospho-beta-D-ribosylamino)methylideneamino]imidazole-4-carboxamide. It participates in amino-acid biosynthesis; L-histidine biosynthesis; L-histidine from 5-phospho-alpha-D-ribose 1-diphosphate: step 3/9. In terms of biological role, catalyzes the hydrolysis of the adenine ring of phosphoribosyl-AMP. The protein is Phosphoribosyl-AMP cyclohydrolase of Hydrogenovibrio crunogenus (strain DSM 25203 / XCL-2) (Thiomicrospira crunogena).